The primary structure comprises 141 residues: Large ribosomal subunit protein uL16 (141 aa).

It belongs to the universal ribosomal protein uL16 family. Part of the 50S ribosomal subunit.

Functionally, binds 23S rRNA and is also seen to make contacts with the A and possibly P site tRNAs. In Petrotoga mobilis (strain DSM 10674 / SJ95), this protein is Large ribosomal subunit protein uL16.